The primary structure comprises 208 residues: Small ribosomal subunit protein uS4 (208 aa).

In terms of domain architecture, S4 RNA-binding spans 95 to 157; sequence RRIDNIVYRA…DSLKKLIRSN (63 aa).

Belongs to the universal ribosomal protein uS4 family. As to quaternary structure, part of the 30S ribosomal subunit. Contacts protein S5. The interaction surface between S4 and S5 is involved in control of translational fidelity.

Its function is as follows. One of the primary rRNA binding proteins, it binds directly to 16S rRNA where it nucleates assembly of the body of the 30S subunit. Functionally, with S5 and S12 plays an important role in translational accuracy. The sequence is that of Small ribosomal subunit protein uS4 from Borrelia garinii subsp. bavariensis (strain ATCC BAA-2496 / DSM 23469 / PBi) (Borreliella bavariensis).